The sequence spans 420 residues: MSKGKVCLAYSGGLDTSVILAWLLDQGYEVVAFMANVGQEEDFDAAKEKALKIGACKFVCVDCREDFVKDILFPAVQVNAVYEDVYLLGTSLARPVIAKAQIDVAKQEGCFAVSHGCTGKGNDQIRFELSFYALKPDVKCITPWRMPEFFERFAGRKDLLDYAAQKGIPVAQTKAKPWSTDENQAHISYEAGILEDPDTTPPKDMWKLIVDPMDAPDQPQDLTIDFERGLPVKLTYTDNKTSKEVSVTKPLDVFLAASNLARANGVGRIDIVEDRYINLKSRGCYEQAPLTVLRKAHVDLEGLTLDKEVRQLRDSFVTPNYSRLIYNGSYFTPECEYIRSMIQPSQNSVNGTVRVRLYKGNVIILGRSTKTEKLYDPTESSMDELTGFLPTDTTGFIAIQAIRIKKYGESKKTKGEELTL.

ATP contacts are provided by residues 9–17 and alanine 35; that span reads AYSGGLDTS. L-citrulline-binding residues include tyrosine 86 and serine 91. 114 to 122 is a binding site for ATP; it reads SHGCTGKGN. Residues threonine 118, asparagine 122, and aspartate 123 each coordinate L-aspartate. Asparagine 122 serves as a coordination point for L-citrulline. L-citrulline is bound by residues arginine 126, serine 179, serine 188, glutamate 273, and tyrosine 285.

It belongs to the argininosuccinate synthase family. Type 1 subfamily. As to quaternary structure, homotetramer.

It is found in the cytoplasm. The enzyme catalyses L-citrulline + L-aspartate + ATP = 2-(N(omega)-L-arginino)succinate + AMP + diphosphate + H(+). It participates in amino-acid biosynthesis; L-arginine biosynthesis; L-arginine from L-ornithine and carbamoyl phosphate: step 2/3. Its function is as follows. Catalyzes the eighth step in arginine biosynthesis. Also has a catabolic function as the first enzyme of citrulline utilization as nitrogen source via arginine and the reactions involved in the arginase pathway. This is Argininosuccinate synthase (ARG1) from Saccharomyces cerevisiae (strain ATCC 204508 / S288c) (Baker's yeast).